The following is a 140-amino-acid chain: Mediator of RNA polymerase II transcription subunit 21 (140 aa).

The stretch at 52-130 forms a coiled coil; sequence EERERTLEEL…CDELILKLAQ (79 aa).

This sequence belongs to the Mediator complex subunit 21 family. As to quaternary structure, component of the Mediator complex.

It localises to the nucleus. Functionally, component of the Mediator complex, a coactivator involved in the regulated transcription of nearly all RNA polymerase II-dependent genes. Mediator functions as a bridge to convey information from gene-specific regulatory proteins to the basal RNA polymerase II transcription machinery. Mediator is recruited to promoters by direct interactions with regulatory proteins and serves as a scaffold for the assembly of a functional preinitiation complex with RNA polymerase II and the general transcription factors. This Yarrowia lipolytica (strain CLIB 122 / E 150) (Yeast) protein is Mediator of RNA polymerase II transcription subunit 21 (SRB7).